A 368-amino-acid chain; its full sequence is tRNA-specific 2-thiouridylase MnmA (368 aa).

Residues 11 to 18 and Met37 each bind ATP; that span reads GMSGGVDS. The tract at residues 97 to 99 is interaction with target base in tRNA; sequence NPD. Cys102 functions as the Nucleophile in the catalytic mechanism. A disulfide bridge links Cys102 with Cys199. Residue Gly127 coordinates ATP. An interaction with tRNA region spans residues 149–151; the sequence is KDQ. The active-site Cysteine persulfide intermediate is Cys199. Positions 311–312 are interaction with tRNA; the sequence is RY.

The protein belongs to the MnmA/TRMU family. Interacts with TusE.

It is found in the cytoplasm. The enzyme catalyses S-sulfanyl-L-cysteinyl-[protein] + uridine(34) in tRNA + AH2 + ATP = 2-thiouridine(34) in tRNA + L-cysteinyl-[protein] + A + AMP + diphosphate + H(+). Functionally, catalyzes the 2-thiolation of uridine at the wobble position (U34) of tRNA(Lys), tRNA(Glu) and tRNA(Gln), leading to the formation of s(2)U34, the first step of tRNA-mnm(5)s(2)U34 synthesis. Sulfur is provided by IscS, via a sulfur-relay system. Binds ATP and its substrate tRNAs. This chain is tRNA-specific 2-thiouridylase MnmA, found in Salmonella paratyphi B (strain ATCC BAA-1250 / SPB7).